The primary structure comprises 339 residues: D-alanine--D-alanine ligase (339 aa).

The ATP-grasp domain occupies 115–327; it reads KHIFRSLGID…FNELVKIIIE (213 aa). 142–211 is a binding site for ATP; sequence KIDYPYVLKP…EEYIPGIELH (70 aa). Asp279, Glu293, and Asn295 together coordinate Mg(2+).

The protein belongs to the D-alanine--D-alanine ligase family. Mg(2+) is required as a cofactor. The cofactor is Mn(2+).

Its subcellular location is the cytoplasm. It catalyses the reaction 2 D-alanine + ATP = D-alanyl-D-alanine + ADP + phosphate + H(+). Its pathway is cell wall biogenesis; peptidoglycan biosynthesis. Cell wall formation. This chain is D-alanine--D-alanine ligase, found in Wolbachia sp. subsp. Brugia malayi (strain TRS).